The primary structure comprises 550 residues: Acidic amino acid decarboxylase GADL1 (550 aa).

At K362 the chain carries N6-(pyridoxal phosphate)lysine.

This sequence belongs to the group II decarboxylase family. In terms of assembly, homodimer. Requires pyridoxal 5'-phosphate as cofactor. As to expression, expressed in skeletal muscles and kidney (at protein level). Expressed in skeletal muscle and weakly in brain. Not expressed in liver or kidney. Expressed in brain, olfactory bulb, liver, muscle and kidney with the highest expression in olfactory bulb and almost not detected in liver (at protein level).

The catalysed reaction is L-aspartate + H(+) = beta-alanine + CO2. The enzyme catalyses 3-sulfino-L-alanine + H(+) = hypotaurine + CO2. It catalyses the reaction L-cysteate + H(+) = taurine + CO2. Activated weakly by 0.2-0.4 mM Li(+). Inhibited by bis-carboxymethyl-trithiocarbonate, ethylxanthogenacetic acid and 2,5-disulfoaniline. Its function is as follows. Catalyzes the decarboxylation of L-aspartate, 3-sulfino-L-alanine (cysteine sulfinic acid), and L-cysteate to beta-alanine, hypotaurine and taurine, respectively. The preferred substrate is L-aspartate. Does not exhibit any decarboxylation activity toward glutamate. This is Acidic amino acid decarboxylase GADL1 from Mus musculus (Mouse).